We begin with the raw amino-acid sequence, 210 residues long: Large ribosomal subunit protein uL16 (210 aa).

It belongs to the universal ribosomal protein uL16 family. Component of the large ribosomal subunit. Mature ribosomes consist of a small (40S) and a large (60S) subunit. The 40S subunit contains about 33 different proteins and 1 molecule of RNA (18S). The 60S subunit contains about 49 different proteins and 3 molecules of RNA (28S, 5.8S and 5S).

The protein localises to the cytoplasm. Functionally, component of the large ribosomal subunit. Plays a role in the formation of actively translating ribosomes. (Microbial infection) Seems to bind to the leucine zipper of viral and cellular JUN. The chain is Large ribosomal subunit protein uL16 from Gallus gallus (Chicken).